We begin with the raw amino-acid sequence, 335 residues long: Probable cytosolic iron-sulfur protein assembly protein Ciao1 (335 aa).

WD repeat units lie at residues 12–51 (GHKG…WSTK), 57–96 (GHKR…FECN), 101–140 (GHEN…EFEC), 146–185 (PHTQ…NDWD), 192–231 (SHTS…NTAG), 250–289 (QHSR…KPDE), and 301–335 (AHDQ…KVSE).

This sequence belongs to the WD repeat CIA1 family.

Its function is as follows. Essential component of the cytosolic iron-sulfur (Fe/S) protein assembly machinery. Required for the maturation of extramitochondrial Fe/S proteins. This chain is Probable cytosolic iron-sulfur protein assembly protein Ciao1, found in Drosophila simulans (Fruit fly).